Reading from the N-terminus, the 971-residue chain is Valine--tRNA ligase (971 aa).

Residues 55–65 carry the 'HIGH' region motif; that stretch reads PNVTGSLHMGH. The 'KMSKS' region signature appears at 572-576; it reads KMSKS. Lysine 575 lines the ATP pocket. Positions 906–933 form a coiled coil; the sequence is KAELGRLQKDLDKVQKQHDQIASKLANE.

The protein belongs to the class-I aminoacyl-tRNA synthetase family. ValS type 1 subfamily. As to quaternary structure, monomer.

It localises to the cytoplasm. It carries out the reaction tRNA(Val) + L-valine + ATP = L-valyl-tRNA(Val) + AMP + diphosphate. Catalyzes the attachment of valine to tRNA(Val). As ValRS can inadvertently accommodate and process structurally similar amino acids such as threonine, to avoid such errors, it has a 'posttransfer' editing activity that hydrolyzes mischarged Thr-tRNA(Val) in a tRNA-dependent manner. The polypeptide is Valine--tRNA ligase (Acinetobacter baylyi (strain ATCC 33305 / BD413 / ADP1)).